A 209-amino-acid polypeptide reads, in one-letter code: Small ribosomal subunit protein uS4 (209 aa).

The region spanning 98 to 161 (TRLDNVVYRM…AKQLRVQEAL (64 aa)) is the S4 RNA-binding domain.

This sequence belongs to the universal ribosomal protein uS4 family. In terms of assembly, part of the 30S ribosomal subunit. Contacts protein S5. The interaction surface between S4 and S5 is involved in control of translational fidelity.

One of the primary rRNA binding proteins, it binds directly to 16S rRNA where it nucleates assembly of the body of the 30S subunit. Functionally, with S5 and S12 plays an important role in translational accuracy. The protein is Small ribosomal subunit protein uS4 of Stenotrophomonas maltophilia (strain R551-3).